The chain runs to 172 residues: Small ribosomal subunit protein uS5 (172 aa).

Positions 13–76 (LIEKMVAVNR…DQARRSMIKV (64 aa)) constitute an S5 DRBM domain.

Belongs to the universal ribosomal protein uS5 family. Part of the 30S ribosomal subunit. Contacts proteins S4 and S8.

Functionally, with S4 and S12 plays an important role in translational accuracy. Located at the back of the 30S subunit body where it stabilizes the conformation of the head with respect to the body. The polypeptide is Small ribosomal subunit protein uS5 (Neisseria gonorrhoeae (strain ATCC 700825 / FA 1090)).